A 310-amino-acid chain; its full sequence is Acetaldehyde dehydrogenase 1 (310 aa).

NAD(+) is bound at residue 12-15; it reads SGNI. The Acyl-thioester intermediate role is filled by cysteine 132. NAD(+) contacts are provided by residues 163 to 171 and asparagine 287; that span reads SAGPGTRAN.

It belongs to the acetaldehyde dehydrogenase family.

The enzyme catalyses acetaldehyde + NAD(+) + CoA = acetyl-CoA + NADH + H(+). In Pseudomonas putida (strain W619), this protein is Acetaldehyde dehydrogenase 1.